The sequence spans 122 residues: Large ribosomal subunit protein uL14 (122 aa).

The protein belongs to the universal ribosomal protein uL14 family. Part of the 50S ribosomal subunit. Forms a cluster with proteins L3 and L19. In the 70S ribosome, L14 and L19 interact and together make contacts with the 16S rRNA in bridges B5 and B8.

Binds to 23S rRNA. Forms part of two intersubunit bridges in the 70S ribosome. The sequence is that of Large ribosomal subunit protein uL14 from Carboxydothermus hydrogenoformans (strain ATCC BAA-161 / DSM 6008 / Z-2901).